We begin with the raw amino-acid sequence, 161 residues long: MVTAIYPGTFDPLTRGHEDLVRRASGLFDKLIVGVADSRNKKPFFSLEERLTISNEVLGHYPNVHVESFSGLLKDFVRRHDARVIVRGLRAVSDFEYEFQMAGMNRYLLPDVETLFLTPSDQYQFISGTIVREIATLGGDVSKFVFPSVDKWLKEKIAAQG.

Residue Thr-9 participates in substrate binding. Residues Thr-9–Phe-10 and His-17 each bind ATP. 3 residues coordinate substrate: Lys-41, Leu-73, and Arg-87. ATP is bound by residues Gly-88–Arg-90, Glu-98, and Tyr-123–Thr-129.

Belongs to the bacterial CoaD family. Homohexamer. Requires Mg(2+) as cofactor.

Its subcellular location is the cytoplasm. It carries out the reaction (R)-4'-phosphopantetheine + ATP + H(+) = 3'-dephospho-CoA + diphosphate. It participates in cofactor biosynthesis; coenzyme A biosynthesis; CoA from (R)-pantothenate: step 4/5. In terms of biological role, reversibly transfers an adenylyl group from ATP to 4'-phosphopantetheine, yielding dephospho-CoA (dPCoA) and pyrophosphate. The sequence is that of Phosphopantetheine adenylyltransferase from Janthinobacterium sp. (strain Marseille) (Minibacterium massiliensis).